The following is a 3387-amino-acid chain: Genome polyprotein (3387 aa).

Residues 1 to 100 (MNQRKKVVRP…LNILNGRKRS (100 aa)) lie on the Cytoplasmic side of the membrane. The tract at residues 36-71 (LFSGKGPLRMVLAFITFLRVLSIPPTAGILKRWGQL) is hydrophobic; homodimerization of capsid protein C. The propeptide at 100–113 (STITLLCLIPTVMA) is ER anchor for the capsid protein C, removed in mature form by serine protease NS3. Residues 101 to 117 (TITLLCLIPTVMAFSLS) form a helical membrane-spanning segment. At 118–237 (TRDGEPLMIV…GAWKHAQRVE (120 aa)) the chain is on the extracellular side. An N-linked (GlcNAc...) asparagine; by host glycan is attached at Asn-182. A helical transmembrane segment spans residues 238-258 (SWILRNPGFALLAGFMAYMIG). The Cytoplasmic portion of the chain corresponds to 259-265 (QTGIQRT). Residues 266-279 (VFFVLMMLVAPSYG) traverse the membrane as a helical segment. Residues 280–725 (MRCVGVGNRD…HQVFGSVYTT (446 aa)) lie on the Extracellular side of the membrane. 4 cysteine pairs are disulfide-bonded: Cys-282-Cys-309, Cys-339-Cys-400, Cys-353-Cys-384, and Cys-371-Cys-395. Asn-346 is a glycosylation site (N-linked (GlcNAc...) asparagine; by host). The fusion peptide stretch occupies residues 377-390 (DRGWGNGCGLFGKG). N-linked (GlcNAc...) asparagine; by host glycosylation occurs at Asn-432. 2 disulfides stabilise this stretch: Cys-464–Cys-564 and Cys-581–Cys-612. A helical transmembrane segment spans residues 726–746 (MFGGVSWMIRILIGFLVLWIG). The Cytoplasmic segment spans residues 747–751 (TNSRN). A helical membrane pass occupies residues 752-772 (TSMAMTCIAVGGITLFLGFTV). Residues 773-1194 (QADMGCVASW…MLGDTMSGRI (422 aa)) lie on the Extracellular side of the membrane. 6 disulfide bridges follow: Cys-778–Cys-789, Cys-829–Cys-917, Cys-953–Cys-997, Cys-1054–Cys-1103, Cys-1065–Cys-1087, and Cys-1086–Cys-1090. N-linked (GlcNAc...) asparagine; by host glycosylation is found at Asn-904 and Asn-981. A helical membrane pass occupies residues 1195-1218 (GGQIHLAIMAVFKMSPGYVLGVFL). Residues 1219–1224 (RKLTSR) lie on the Lumenal side of the membrane. The chain crosses the membrane as a helical span at residues 1225–1243 (ETALMVIGMAMTTVLSIPH). Residues 1244–1267 (DLMELIDGISLGLILLKIVTQFDN) are Cytoplasmic-facing. The helical transmembrane segment at 1268–1288 (TQVGTLALSLTFIRSTMPLVM) threads the bilayer. A topological domain (lumenal) is located at residue Ala-1289. A helical membrane pass occupies residues 1290–1308 (WRTIMAVLFVVTLIPLCRT). Residues 1309–1316 (SCLQKQSH) lie on the Lumenal side of the membrane. A helical transmembrane segment spans residues 1317–1337 (WVEITALILGAQALPVYLMTL). Over 1338 to 1345 (MKGASRRS) the chain is Cytoplasmic. A helical transmembrane segment spans residues 1346–1366 (WPLNEGIMAVGLVSLLGSALL). The Lumenal portion of the chain corresponds to 1367–1369 (KND). The chain crosses the membrane as a helical span at residues 1370–1390 (VPLAGPMVAGGLLLAAYVMSG). At 1391–1437 (SSADLSLEKAANVQWDEMADITGSSPIIEVKQDEDGSFSIRDVEETN) the chain is on the cytoplasmic side. The segment at 1397–1436 (LEKAANVQWDEMADITGSSPIIEVKQDEDGSFSIRDVEET) is interacts with and activates NS3 protease. Positions 1438–1458 (MITLLVKLALITVSGLYPLAI) form an intramembrane region, helical. The Cytoplasmic segment spans residues 1459–2143 (PVTMTLWYMW…QHALNELPES (685 aa)). A Peptidase S7 domain is found at 1475 to 1652 (SGALWDVPSP…ERIGEPDYEV (178 aa)). Active-site charge relay system; for serine protease NS3 activity residues include His-1525, Asp-1549, and Ser-1609. The 157-residue stretch at 1654 to 1810 (EDIFRKKRLT…QSNSPIEDIE (157 aa)) folds into the Helicase ATP-binding domain. The segment at 1658-1661 (RKKR) is important for RNA-binding. Position 1667–1674 (1667–1674 (LHPGAGKT)) interacts with ATP. A DEAH box motif is present at residues 1758 to 1761 (DEAH). In terms of domain architecture, Helicase C-terminal spans 1820–1987 (TGFDWITDYQ…IIPTLFGPER (168 aa)). Lys-1862 carries the N6-acetyllysine; by host modification. A helical transmembrane segment spans residues 2144-2164 (LETLMLVALLGAMTAGIFLFF). The Lumenal portion of the chain corresponds to 2165–2169 (MQGKG). An intramembrane region (helical) is located at residues 2170-2190 (IGKLSMGLITIAVASGLLWVA). Residue Glu-2191 is a topological domain, lumenal. The chain crosses the membrane as a helical span at residues 2192–2212 (IQPQWIAASIILEFFLMVLLI). Over 2213–2225 (PEPEKQRTPQDNQ) the chain is Cytoplasmic. Residues 2226-2246 (LIYVILTILTIIGLIAANEMG) traverse the membrane as a helical segment. The Lumenal segment spans residues 2247-2270 (LIEKTKTDFGFYQVKTETTILDVD). The segment at residues 2271-2291 (LRPASAWTLYAVATTILTPML) is an intramembrane region (helical). Residues 2292-2301 (RHTIENTSAN) are Lumenal-facing. N-linked (GlcNAc...) asparagine; by host glycosylation is found at Asn-2297 and Asn-2301. The helical intramembrane region spans 2302 to 2322 (LSLAAIANQAAVLMGLGKGWP). Topologically, residues 2323–2343 (LHRMDLGVPLLAMGCYSQVNP) are lumenal. Residues 2344–2364 (TTLTASLVMLLVHYAIIGPGL) traverse the membrane as a helical segment. Residues 2365 to 2409 (QAKATREAQKRTAAGIMKNPTVDGITVIDLEPISYDPKFEKQLGQ) are Cytoplasmic-facing. Residues 2410-2430 (VMLLVLCAGQLLLMRTTWAFC) form a helical membrane-spanning segment. Topologically, residues 2431–2455 (EVLTLATGPILTLWEGNPGRFWNTT) are lumenal. An N-linked (GlcNAc...) asparagine; by host glycan is attached at Asn-2453. A helical transmembrane segment spans residues 2456–2476 (IAVSTANIFRGSYLAGAGLAF). Residues 2477-3387 (SLIKNAQTPR…SAPSESEGVL (911 aa)) lie on the Cytoplasmic side of the membrane. Residues 2489 to 2751 (TGTTGETLGE…DVDLGAGTRS (263 aa)) form the mRNA cap 0-1 NS5-type MT domain. Ser-2543 provides a ligand contact to S-adenosyl-L-methionine. Ser-2543 carries the post-translational modification Phosphoserine. Catalysis depends on Lys-2548, which acts as the For 2'-O-MTase activity. Residues 2564-2567 (VVDL) carry the SUMO-interacting motif motif. 6 residues coordinate S-adenosyl-L-methionine: Gly-2573, Trp-2574, Thr-2591, Lys-2592, Asp-2618, and Val-2619. Asp-2633 (for 2'-O-MTase activity) is an active-site residue. Ile-2634 provides a ligand contact to S-adenosyl-L-methionine. Active-site for 2'-O-MTase activity residues include Lys-2668 and Glu-2704. An S-adenosyl-L-methionine-binding site is contributed by Tyr-2706. 4 residues coordinate Zn(2+): Glu-2925, His-2929, Cys-2934, and Cys-2937. The RdRp catalytic domain occupies 3016-3166 (LMYADDTAGW…PLDERFGTSL (151 aa)). Residues His-3200, Cys-3216, and Cys-3335 each contribute to the Zn(2+) site.

It in the N-terminal section; belongs to the class I-like SAM-binding methyltransferase superfamily. mRNA cap 0-1 NS5-type methyltransferase family. As to quaternary structure, homodimer. Interacts (via N-terminus) with host EXOC1 (via C-terminus); this interaction results in EXOC1 degradation through the proteasome degradation pathway. Forms heterodimers with envelope protein E in the endoplasmic reticulum and Golgi. In terms of assembly, homodimer; in the endoplasmic reticulum and Golgi. Interacts with protein prM. Interacts with non-structural protein 1. As to quaternary structure, homodimer; Homohexamer when secreted. Interacts with envelope protein E. Interacts (via N-terminus) with serine protease NS3. In terms of assembly, forms a heterodimer with serine protease NS3. May form homooligomers. As to quaternary structure, forms a heterodimer with NS2B. Interacts with NS4B. Interacts with unphosphorylated RNA-directed RNA polymerase NS5; this interaction stimulates RNA-directed RNA polymerase NS5 guanylyltransferase activity. Interacts with host SHFL. Interacts with host MAVS; this interaction inhibits the synthesis of IFN-beta. Interacts with host SHFL. Interacts with host AUP1; the interaction occurs in the presence of Dengue virus NS4B and induces lipophagy which facilitates production of virus progeny particles. In terms of assembly, interacts with serine protease NS3. As to quaternary structure, homodimer. Interacts with host STAT2; this interaction inhibits the phosphorylation of the latter, and, when all viral proteins are present (polyprotein), targets STAT2 for degradation. Interacts with serine protease NS3. Interacts with host PAF1 complex; the interaction may prevent the recruitment of the PAF1 complex to interferon-responsive genes, and thus reduces the immune response. Post-translationally, specific enzymatic cleavages in vivo yield mature proteins. Cleavages in the lumen of endoplasmic reticulum are performed by host signal peptidase, whereas cleavages in the cytoplasmic side are performed by serine protease NS3. Signal cleavage at the 2K-4B site requires a prior NS3 protease-mediated cleavage at the 4A-2K site. Cleaved in post-Golgi vesicles by a host furin, releasing the mature small envelope protein M, and peptide pr. This cleavage is incomplete as up to 30% of viral particles still carry uncleaved prM. In terms of processing, N-glycosylated. Post-translationally, N-glycosylated. The excreted form is glycosylated and this is required for efficient secretion of the protein from infected cells. Acetylated by host KAT5. Acetylation modulates NS3 RNA-binding and unwinding activities and plays an important positive role for viral replication. In terms of processing, sumoylation of RNA-directed RNA polymerase NS5 increases NS5 protein stability allowing proper viral RNA replication. Post-translationally, phosphorylated on serines residues. This phosphorylation may trigger NS5 nuclear localization.

It is found in the virion. Its subcellular location is the host nucleus. It localises to the host cytoplasm. The protein resides in the host perinuclear region. The protein localises to the secreted. It is found in the virion membrane. Its subcellular location is the host endoplasmic reticulum membrane. It localises to the host mitochondrion. The enzyme catalyses Selective hydrolysis of -Xaa-Xaa-|-Yaa- bonds in which each of the Xaa can be either Arg or Lys and Yaa can be either Ser or Ala.. It catalyses the reaction RNA(n) + a ribonucleoside 5'-triphosphate = RNA(n+1) + diphosphate. It carries out the reaction a ribonucleoside 5'-triphosphate + H2O = a ribonucleoside 5'-diphosphate + phosphate + H(+). The catalysed reaction is ATP + H2O = ADP + phosphate + H(+). The enzyme catalyses a 5'-end (5'-triphosphoguanosine)-ribonucleoside in mRNA + S-adenosyl-L-methionine = a 5'-end (N(7)-methyl 5'-triphosphoguanosine)-ribonucleoside in mRNA + S-adenosyl-L-homocysteine. It catalyses the reaction a 5'-end (N(7)-methyl 5'-triphosphoguanosine)-ribonucleoside in mRNA + S-adenosyl-L-methionine = a 5'-end (N(7)-methyl 5'-triphosphoguanosine)-(2'-O-methyl-ribonucleoside) in mRNA + S-adenosyl-L-homocysteine + H(+). Functionally, plays a role in virus budding by binding to the cell membrane and gathering the viral RNA into a nucleocapsid that forms the core of a mature virus particle. During virus entry, may induce genome penetration into the host cytoplasm after hemifusion induced by the surface proteins. Can migrate to the cell nucleus where it modulates host functions. Overcomes the anti-viral effects of host EXOC1 by sequestering and degrading the latter through the proteasome degradation pathway. In terms of biological role, regulates the ATPase activity of the NS3 helicase activity. NS4A allows NS3 helicase to conserve energy during unwinding. Plays a role in the inhibition of the host innate immune response. Interacts with host MAVS and thereby prevents the interaction between RIGI and MAVS. In turn, IFN-beta production is impaired. Interacts with host AUP1 which mediates induction of lipophagy in host cells and facilitates production of virus progeny particles. Inhibits RNA silencing by interfering with host Dicer. Its function is as follows. Prevents premature fusion activity of envelope proteins in trans-Golgi by binding to envelope protein E at pH6.0. After virion release in extracellular space, gets dissociated from E dimers. Functionally, acts as a chaperone for envelope protein E during intracellular virion assembly by masking and inactivating envelope protein E fusion peptide. prM is the only viral peptide matured by host furin in the trans-Golgi network probably to avoid catastrophic activation of the viral fusion activity in acidic Golgi compartment prior to virion release. prM-E cleavage is inefficient, and many virions are only partially matured. These uncleaved prM would play a role in immune evasion. In terms of biological role, may play a role in virus budding. Exerts cytotoxic effects by activating a mitochondrial apoptotic pathway through M ectodomain. May display a viroporin activity. Binds to host cell surface receptor and mediates fusion between viral and cellular membranes. Envelope protein is synthesized in the endoplasmic reticulum in the form of heterodimer with protein prM. They play a role in virion budding in the ER, and the newly formed immature particle is covered with 60 spikes composed of heterodimer between precursor prM and envelope protein E. The virion is transported to the Golgi apparatus where the low pH causes dissociation of PrM-E heterodimers and formation of E homodimers. prM-E cleavage is inefficient, and many virions are only partially matured. These uncleaved prM would play a role in immune evasion. Its function is as follows. Involved in immune evasion, pathogenesis and viral replication. Once cleaved off the polyprotein, is targeted to three destinations: the viral replication cycle, the plasma membrane and the extracellular compartment. Essential for viral replication. Required for formation of the replication complex and recruitment of other non-structural proteins to the ER-derived membrane structures. Excreted as a hexameric lipoparticle that plays a role against host immune response. Antagonizing the complement function. Binds to the host macrophages and dendritic cells. Inhibits signal transduction originating from Toll-like receptor 3 (TLR3). Functionally, disrupts the host endothelial glycocalyx layer of host pulmonary microvascular endothelial cells, inducing degradation of sialic acid and shedding of heparan sulfate proteoglycans. NS1 induces expression of sialidases, heparanase, and activates cathepsin L, which activates heparanase via enzymatic cleavage. These effects are probably linked to the endothelial hyperpermeability observed in severe dengue disease. In terms of biological role, component of the viral RNA replication complex that functions in virion assembly and antagonizes the host immune response. Required cofactor for the serine protease function of NS3. May have membrane-destabilizing activity and form viroporins. Its function is as follows. Displays three enzymatic activities: serine protease, NTPase and RNA helicase. NS3 serine protease, in association with NS2B, performs its autocleavage and cleaves the polyprotein at dibasic sites in the cytoplasm: C-prM, NS2A-NS2B, NS2B-NS3, NS3-NS4A, NS4A-2K and NS4B-NS5. NS3 RNA helicase binds RNA and unwinds dsRNA in the 3' to 5' direction. Functionally, functions as a signal peptide for NS4B and is required for the interferon antagonism activity of the latter. In terms of biological role, induces the formation of ER-derived membrane vesicles where the viral replication takes place. Inhibits interferon (IFN)-induced host STAT1 phosphorylation and nuclear translocation, thereby preventing the establishment of cellular antiviral state by blocking the IFN-alpha/beta pathway. Replicates the viral (+) and (-) RNA genome, and performs the capping of genomes in the cytoplasm. NS5 methylates viral RNA cap at guanine N-7 and ribose 2'-O positions. Besides its role in RNA genome replication, also prevents the establishment of cellular antiviral state by blocking the interferon-alpha/beta (IFN-alpha/beta) signaling pathway. Inhibits host TYK2 and STAT2 phosphorylation, thereby preventing activation of JAK-STAT signaling pathway. May reduce immune responses by preventing the recruitment of the host PAF1 complex to interferon-responsive genes. This chain is Genome polyprotein, found in Dengue virus type 4 (strain Dominica/814669/1981) (DENV-4).